Reading from the N-terminus, the 310-residue chain is Protein-L-isoaspartate O-methyltransferase (310 aa).

A disordered region spans residues 1 to 41; sequence MSGERAKRFPLALEDLKRAPRKSEGRPGERQTAGAVPKAAD. Over residues 14-29 the composition is skewed to basic and acidic residues; the sequence is EDLKRAPRKSEGRPGE. Residue S157 is part of the active site.

This sequence belongs to the methyltransferase superfamily. L-isoaspartyl/D-aspartyl protein methyltransferase family.

It localises to the cytoplasm. It catalyses the reaction [protein]-L-isoaspartate + S-adenosyl-L-methionine = [protein]-L-isoaspartate alpha-methyl ester + S-adenosyl-L-homocysteine. Functionally, catalyzes the methyl esterification of L-isoaspartyl residues in peptides and proteins that result from spontaneous decomposition of normal L-aspartyl and L-asparaginyl residues. It plays a role in the repair and/or degradation of damaged proteins. The protein is Protein-L-isoaspartate O-methyltransferase of Burkholderia cenocepacia (strain HI2424).